Consider the following 424-residue polypeptide: Serine--tRNA ligase (424 aa).

Residues 109–129 (QEDVPYGESEEDNREERKWGD) are disordered. 231 to 233 (TAE) provides a ligand contact to L-serine. Residue 262-264 (RSE) participates in ATP binding. E285 contributes to the L-serine binding site. Residue 349 to 352 (EISS) participates in ATP binding. S385 is a binding site for L-serine.

It belongs to the class-II aminoacyl-tRNA synthetase family. Type-1 seryl-tRNA synthetase subfamily. As to quaternary structure, homodimer. The tRNA molecule binds across the dimer.

It localises to the cytoplasm. It catalyses the reaction tRNA(Ser) + L-serine + ATP = L-seryl-tRNA(Ser) + AMP + diphosphate + H(+). The enzyme catalyses tRNA(Sec) + L-serine + ATP = L-seryl-tRNA(Sec) + AMP + diphosphate + H(+). The protein operates within aminoacyl-tRNA biosynthesis; selenocysteinyl-tRNA(Sec) biosynthesis; L-seryl-tRNA(Sec) from L-serine and tRNA(Sec): step 1/1. Functionally, catalyzes the attachment of serine to tRNA(Ser). Is also able to aminoacylate tRNA(Sec) with serine, to form the misacylated tRNA L-seryl-tRNA(Sec), which will be further converted into selenocysteinyl-tRNA(Sec). The polypeptide is Serine--tRNA ligase (Shouchella clausii (strain KSM-K16) (Alkalihalobacillus clausii)).